The sequence spans 662 residues: Glycine--tRNA ligase beta subunit (662 aa).

This sequence belongs to the class-II aminoacyl-tRNA synthetase family. Tetramer of two alpha and two beta subunits.

It localises to the cytoplasm. The catalysed reaction is tRNA(Gly) + glycine + ATP = glycyl-tRNA(Gly) + AMP + diphosphate. The chain is Glycine--tRNA ligase beta subunit from Rickettsia akari (strain Hartford).